A 397-amino-acid chain; its full sequence is Alpha-lytic protease (397 aa).

The first 24 residues, 1–24, serve as a signal peptide directing secretion; that stretch reads MYVSNHRSRRVARVSVSCLVAALA. Residues 25-199 constitute a propeptide that is removed on maturation; that stretch reads AMSCGAALAA…ESSPGKLQTT (175 aa). The cysteines at positions 216 and 236 are disulfide-linked. Residues His-235 and Asp-262 each act as charge relay system in the active site. Cystine bridges form between Cys-300–Cys-310 and Cys-336–Cys-369. The Charge relay system role is filled by Ser-342.

The protein belongs to the peptidase S1 family.

The catalysed reaction is Preferential cleavage: Ala-|-Xaa, Val-|-Xaa in bacterial cell walls, elastin and other proteins.. The protein is Alpha-lytic protease (alpha-LP) of Lysobacter enzymogenes.